The primary structure comprises 490 residues: GTPase Der (490 aa).

2 EngA-type G domains span residues 3-167 (FTLA…DAFE) and 203-378 (LQVA…EVWN). GTP-binding positions include 9 to 16 (GRPNVGKS), 56 to 60 (DTAGL), 119 to 122 (NKAE), 209 to 216 (GRPNAGKS), 256 to 260 (DTAGM), and 321 to 324 (NKWD). Residues 379-465 (RRVPTAALNR…RLTMRSQSDA (87 aa)) form the KH-like domain. Residues 451–490 (PGTPIRLTMRSQSDANPYKNRKKSTPSRLRKHLGKPSLKG) are disordered. A compositionally biased stretch (basic residues) spans 469–484 (KNRKKSTPSRLRKHLG).

This sequence belongs to the TRAFAC class TrmE-Era-EngA-EngB-Septin-like GTPase superfamily. EngA (Der) GTPase family. In terms of assembly, associates with the 50S ribosomal subunit.

Its function is as follows. GTPase that plays an essential role in the late steps of ribosome biogenesis. The sequence is that of GTPase Der from Dinoroseobacter shibae (strain DSM 16493 / NCIMB 14021 / DFL 12).